Consider the following 328-residue polypeptide: Malate dehydrogenase (328 aa).

11–17 (GAAGQIG) is a binding site for NAD(+). Positions 94 and 100 each coordinate substrate. NAD(+) contacts are provided by residues N107, Q114, and 131 to 133 (VGN). Positions 133 and 164 each coordinate substrate. H189 functions as the Proton acceptor in the catalytic mechanism.

This sequence belongs to the LDH/MDH superfamily. MDH type 2 family.

It carries out the reaction (S)-malate + NAD(+) = oxaloacetate + NADH + H(+). Functionally, catalyzes the reversible oxidation of malate to oxaloacetate. The polypeptide is Malate dehydrogenase (Xanthomonas oryzae pv. oryzae (strain PXO99A)).